A 157-amino-acid chain; its full sequence is DNA gyrase inhibitor (157 aa).

It belongs to the DNA gyrase inhibitor family. As to quaternary structure, interacts with DNA gyrase.

It localises to the cytoplasm. Its function is as follows. Inhibits the supercoiling activity of DNA gyrase. Acts by inhibiting DNA gyrase at an early step, prior to (or at the step of) binding of DNA by the gyrase. It protects cells against toxins that target DNA gyrase, by inhibiting activity of these toxins and reducing the formation of lethal double-strand breaks in the cell. This chain is DNA gyrase inhibitor, found in Enterobacter lignolyticus (strain SCF1).